The sequence spans 582 residues: MSSLPTSDGFDHPAPSGQSPEVGSPTSLARSVSASVCAIKPGDPNSIESLAMEATKASAEFQTNSKKTDPPPLQVLPDLASSAEQSLAMPFHKSSKEAVVAGNLEKSVEKGTQGLRVYLHTRQDASLTLTTTGMREPQIFAEEKSWHPENQTPSPVNGLQQHRETGSVQREAGQQSVPQDQGCLCDAEDLELHEEVVSLEALRKGELQRHAHLPSAEKGLPASGLCSCPCSEALMEVDTAEQSLVAMCSSTGRQDAVIKSPSVAHLASDNPTMEVETLQSNPSCEPVEHSILTRELQLPEDNVDMSTMDNKDDNSSSLLSGHGQPSVESAEEFCSSVTVALKELHELLVISCKPASEESPEHVTCQSEIGAESQPSVSDLSGRRVQSVHLTPSDQYSQGSCHQATSESGKTEIVGTAPCAAVEDEASTSFEGLGDGLSPDREDVRRSTESARKSCSVAITSAKLSEQLPCTSGVEIAPELAASEGAHSQPSEHVHNPGPDRPETSSVCPGAGLPRSGLDQPPTQSLSTPSVLPPFIFPAADVDRILGAGFTLQEALGALHRVGGNADLALLVLLAKNIVVPT.

Disordered regions lie at residues 1 to 32 (MSSL…ARSV), 56 to 76 (KASA…LQVL), 143 to 180 (EKSW…VPQD), 303 to 325 (VDMS…HGQP), 363 to 384 (VTCQ…SGRR), 390 to 409 (LTPS…SESG), 426 to 452 (ASTS…ESAR), and 483 to 529 (SEGA…LSTP). A compositionally biased stretch (polar residues) spans 16 to 32 (SGQSPEVGSPTSLARSV). The segment covering 148–179 (PENQTPSPVNGLQQHRETGSVQREAGQQSVPQ) has biased composition (polar residues). Residues 390–408 (LTPSDQYSQGSCHQATSES) show a composition bias toward polar residues. 2 stretches are compositionally biased toward basic and acidic residues: residues 438 to 452 (SPDR…ESAR) and 490 to 503 (PSEH…DRPE). The UBA domain maps to 536–576 (IFPAADVDRILGAGFTLQEALGALHRVGGNADLALLVLLAK).

In terms of assembly, interacts with YRDC. Expressed in epithelial and subepithelial cells of small intestine.

It localises to the cell membrane. The protein resides in the nucleus. Its subcellular location is the golgi apparatus. The protein localises to the trans-Golgi network. In terms of biological role, mediates transcriptional and post-transcriptional regulation of SLC5A1. Inhibits a dynamin and PKC-dependent exocytotic pathway of SLC5A1. Also involved in transcriptional regulation of SLC22A2. Exhibits glucose-dependent, short-term inhibition of SLC5A1 and SLC22A2 by inhibiting the release of vesicles from the trans-Golgi network. Regulates the expression of SLC5A1 in a tissue-specific manner and is specifically involved in its regulation in the small intestine. The protein is Regulatory solute carrier protein family 1 member 1 (Rsc1a1) of Mus musculus (Mouse).